Reading from the N-terminus, the 366-residue chain is Patr class I histocompatibility antigen, C alpha chain (366 aa).

A signal peptide spans 1–24; the sequence is MRVTAPRTLLLLLSGGLALTETWA. The segment at 25–114 is alpha-1; sequence GSHSLRYFDT…LRGYYNQSED (90 aa). Over 25–308 the chain is Extracellular; the sequence is GSHSLRYFDT…KPTSQPTIPI (284 aa). An N-linked (GlcNAc...) asparagine glycan is attached at N110. Residues 115-206 form an alpha-2 region; sequence GSHTLQWMYG…ENGKETLQRT (92 aa). Intrachain disulfides connect C125–C192 and C227–C283. The interval 207-298 is alpha-3; sequence ECPKTHMTHH…GLPEPLTLRW (92 aa). The region spanning 209–297 is the Ig-like C1-type domain; it reads PKTHMTHHPV…EGLPEPLTLR (89 aa). Positions 299-308 are connecting peptide; that stretch reads KPTSQPTIPI. The chain crosses the membrane as a helical span at residues 309–332; the sequence is VGIVAGLAVLAVLAVLGAVVTAMM. The Cytoplasmic segment spans residues 333 to 366; that stretch reads CRRKSSGGKGGSCSQAACSNSAQGSDESLIACKA. A phosphoserine mark is found at S357 and S360.

It belongs to the MHC class I family. In terms of assembly, heterodimer of an alpha chain and a beta chain (beta-2-microglobulin).

The protein localises to the membrane. Its function is as follows. Involved in the presentation of foreign antigens to the immune system. This chain is Patr class I histocompatibility antigen, C alpha chain, found in Pan troglodytes (Chimpanzee).